We begin with the raw amino-acid sequence, 829 residues long: Ectonucleotide pyrophosphatase/phosphodiesterase C27A7.1 (829 aa).

Residues 54-74 form a helical; Signal-anchor for type II membrane protein membrane-spanning segment; that stretch reads VIGIAVLLLAMVVIVVIVLLL. Catalysis depends on Thr224, which acts as the Nucleophile. Asn296, Asn424, Asn514, Asn542, Asn582, Asn649, Asn733, and Asn748 each carry an N-linked (GlcNAc...) asparagine glycan. A disulfide bridge links Cys439 with Cys782.

Belongs to the nucleotide pyrophosphatase/phosphodiesterase family.

The protein resides in the membrane. Its function is as follows. Probable phosphodiesterase. This is Ectonucleotide pyrophosphatase/phosphodiesterase C27A7.1 from Caenorhabditis elegans.